Here is a 297-residue protein sequence, read N- to C-terminus: 33 kDa chaperonin (297 aa).

2 disulfides stabilise this stretch: cysteine 234/cysteine 236 and cysteine 267/cysteine 270.

Belongs to the HSP33 family. In terms of processing, under oxidizing conditions two disulfide bonds are formed involving the reactive cysteines. Under reducing conditions zinc is bound to the reactive cysteines and the protein is inactive.

It is found in the cytoplasm. Redox regulated molecular chaperone. Protects both thermally unfolding and oxidatively damaged proteins from irreversible aggregation. Plays an important role in the bacterial defense system toward oxidative stress. The sequence is that of 33 kDa chaperonin from Pseudoalteromonas atlantica (strain T6c / ATCC BAA-1087).